The primary structure comprises 281 residues: Pantothenate synthetase (281 aa).

30–37 (MGNLHQGH) contacts ATP. His-37 serves as the catalytic Proton donor. Gln-61 contributes to the (R)-pantoate binding site. Gln-61 provides a ligand contact to beta-alanine. 148 to 151 (GQKD) contacts ATP. Gln-154 provides a ligand contact to (R)-pantoate. Residues Ala-177 and 185 to 188 (LSSR) each bind ATP.

Belongs to the pantothenate synthetase family. Homodimer.

The protein localises to the cytoplasm. It catalyses the reaction (R)-pantoate + beta-alanine + ATP = (R)-pantothenate + AMP + diphosphate + H(+). It participates in cofactor biosynthesis; (R)-pantothenate biosynthesis; (R)-pantothenate from (R)-pantoate and beta-alanine: step 1/1. Its function is as follows. Catalyzes the condensation of pantoate with beta-alanine in an ATP-dependent reaction via a pantoyl-adenylate intermediate. This is Pantothenate synthetase from Acinetobacter baylyi (strain ATCC 33305 / BD413 / ADP1).